The sequence spans 1892 residues: Protein TIC 214 (1892 aa).

6 consecutive transmembrane segments (helical) span residues 18–38 (IINS…FSIG), 64–84 (FITG…HLAL), 87–107 (PHTI…WNNH), 124–144 (LSIQ…HFIL), 172–192 (VGWL…LVWI), and 221–241 (IFSI…PSPI). 3 disordered regions span residues 250-300 (SKTE…EGWD), 794-814 (REEQ…ENKR), and 1581-1609 (RIQE…LGPV). The span at 256–268 (VESEEEKDVEIET) shows a compositional bias: acidic residues. The span at 1581–1602 (RIQEEKEPASQGEKERGSDIEN) shows a compositional bias: basic and acidic residues.

Belongs to the TIC214 family. In terms of assembly, part of the Tic complex.

The protein resides in the plastid. Its subcellular location is the chloroplast inner membrane. Functionally, involved in protein precursor import into chloroplasts. May be part of an intermediate translocation complex acting as a protein-conducting channel at the inner envelope. In Nicotiana tomentosiformis (Tobacco), this protein is Protein TIC 214.